The primary structure comprises 330 residues: Tryptophan--tRNA ligase (330 aa).

Residues Q10–S12 and G18–N19 contribute to the ATP site. The 'HIGH' region signature appears at P11–N19. D133 provides a ligand contact to L-tryptophan. ATP-binding positions include G145–D147, I184, and K193–S197. The short motif at K193–S197 is the 'KMSKS' region element.

This sequence belongs to the class-I aminoacyl-tRNA synthetase family. In terms of assembly, homodimer.

The protein resides in the cytoplasm. The enzyme catalyses tRNA(Trp) + L-tryptophan + ATP = L-tryptophyl-tRNA(Trp) + AMP + diphosphate + H(+). Catalyzes the attachment of tryptophan to tRNA(Trp). The protein is Tryptophan--tRNA ligase of Halalkalibacterium halodurans (strain ATCC BAA-125 / DSM 18197 / FERM 7344 / JCM 9153 / C-125) (Bacillus halodurans).